Consider the following 107-residue polypeptide: Phosphoribosyl-ATP pyrophosphatase (107 aa).

This sequence belongs to the PRA-PH family.

The protein localises to the cytoplasm. It catalyses the reaction 1-(5-phospho-beta-D-ribosyl)-ATP + H2O = 1-(5-phospho-beta-D-ribosyl)-5'-AMP + diphosphate + H(+). It functions in the pathway amino-acid biosynthesis; L-histidine biosynthesis; L-histidine from 5-phospho-alpha-D-ribose 1-diphosphate: step 2/9. The sequence is that of Phosphoribosyl-ATP pyrophosphatase from Zymomonas mobilis subsp. mobilis (strain ATCC 31821 / ZM4 / CP4).